The chain runs to 341 residues: Fructose-1,6-bisphosphatase, cytosolic (341 aa).

Residues Glu-71, Glu-100, Asp-121, Leu-123, and Asp-124 each contribute to the Mg(2+) site. Residues 124–127, Asn-215, Tyr-247, Tyr-267, and Lys-277 each bind substrate; that span reads DGSS. Residue Glu-283 participates in Mg(2+) binding.

Belongs to the FBPase class 1 family. Mg(2+) serves as cofactor.

The protein localises to the cytoplasm. The catalysed reaction is beta-D-fructose 1,6-bisphosphate + H2O = beta-D-fructose 6-phosphate + phosphate. This is Fructose-1,6-bisphosphatase, cytosolic from Spinacia oleracea (Spinach).